A 261-amino-acid polypeptide reads, in one-letter code: Syntaxin-7 (261 aa).

An N-acetylserine modification is found at serine 2. At 2–238 (SYTPGIGGDP…NYQRKSRKTL (237 aa)) the chain is on the cytoplasmic side. Residue threonine 4 is modified to Phosphothreonine. Positions 47-68 (ELRQQLQQEQQYTNQLAKETDK) form a coiled coil. Threonine 79 carries the post-translational modification Phosphothreonine. A phosphoserine mark is found at serine 125, serine 126, serine 129, and serine 205. The interval 128 to 148 (VSGGFPEDSSKEKNFVSWESQ) is disordered. Residues 165–227 (LRLIHERESS…QQANQQLSRA (63 aa)) form the t-SNARE coiled-coil homology domain. Residues 239-259 (CIIILILVVGIVIIFFIVWGL) traverse the membrane as a helical; Anchor for type IV membrane protein segment. At 260–261 (KG) the chain is on the vesicular side.

This sequence belongs to the syntaxin family. In terms of assembly, interacts with VPS11, VPS16 and VPS18. Interacts with VPS33A. Forms a SNARE complex with VTI1B, STX8 and VAMP8 which functions in the homotypic fusion of late endosomes. Component of the SNARE complex composed of STX7, STX8, VAMP7 and VTI1B that is required for heterotypic fusion of late endosomes with lysosomes. Interacts with TPC1. As to expression, detected in all tissues tested. Highest expression is found in kidney followed by lung, spleen, heart and brain. Lower expression, in skeletal muscle, liver and testis.

It is found in the early endosome membrane. May be involved in protein trafficking from the plasma membrane to the early endosome (EE) as well as in homotypic fusion of endocytic organelles. Mediates the endocytic trafficking from early endosomes to late endosomes and lysosomes. The protein is Syntaxin-7 (Stx7) of Rattus norvegicus (Rat).